We begin with the raw amino-acid sequence, 191 residues long: Peptidyl-tRNA hydrolase (191 aa).

TRNA is bound at residue Tyr14. Residue His19 is the Proton acceptor of the active site. TRNA is bound by residues Tyr65, Asn67, and Asn113.

Belongs to the PTH family. In terms of assembly, monomer.

The protein resides in the cytoplasm. It catalyses the reaction an N-acyl-L-alpha-aminoacyl-tRNA + H2O = an N-acyl-L-amino acid + a tRNA + H(+). Its function is as follows. Hydrolyzes ribosome-free peptidyl-tRNAs (with 1 or more amino acids incorporated), which drop off the ribosome during protein synthesis, or as a result of ribosome stalling. Catalyzes the release of premature peptidyl moieties from peptidyl-tRNA molecules trapped in stalled 50S ribosomal subunits, and thus maintains levels of free tRNAs and 50S ribosomes. The chain is Peptidyl-tRNA hydrolase from Nitrosospira multiformis (strain ATCC 25196 / NCIMB 11849 / C 71).